We begin with the raw amino-acid sequence, 364 residues long: Ribosomal RNA large subunit methyltransferase F (364 aa).

The tract at residues 1–52 (MPKPAIKTAAKLAMSSAGKRGKPSTPKSLAKPQTTKPKTASKLKAKHGEQKR) is disordered. Residues 25–38 (TPKSLAKPQTTKPK) are compositionally biased toward polar residues.

Belongs to the methyltransferase superfamily. METTL16/RlmF family.

Its subcellular location is the cytoplasm. The catalysed reaction is adenosine(1618) in 23S rRNA + S-adenosyl-L-methionine = N(6)-methyladenosine(1618) in 23S rRNA + S-adenosyl-L-homocysteine + H(+). In terms of biological role, specifically methylates the adenine in position 1618 of 23S rRNA. The protein is Ribosomal RNA large subunit methyltransferase F of Shewanella sp. (strain ANA-3).